A 222-amino-acid chain; its full sequence is Glycerol-3-phosphate acyltransferase (222 aa).

The next 6 membrane-spanning stretches (helical) occupy residues 4-24 (ALLL…IPTG), 56-76 (PAAI…VALV), 87-107 (ALPA…VVLG), 130-150 (FMLN…VIFF), 153-173 (IVSL…LALQ), and 174-191 (LPPP…YVIV).

This sequence belongs to the PlsY family. In terms of assembly, probably interacts with PlsX.

Its subcellular location is the cell inner membrane. The enzyme catalyses an acyl phosphate + sn-glycerol 3-phosphate = a 1-acyl-sn-glycero-3-phosphate + phosphate. The protein operates within lipid metabolism; phospholipid metabolism. In terms of biological role, catalyzes the transfer of an acyl group from acyl-phosphate (acyl-PO(4)) to glycerol-3-phosphate (G3P) to form lysophosphatidic acid (LPA). This enzyme utilizes acyl-phosphate as fatty acyl donor, but not acyl-CoA or acyl-ACP. This is Glycerol-3-phosphate acyltransferase from Synechocystis sp. (strain ATCC 27184 / PCC 6803 / Kazusa).